The following is an 85-amino-acid chain: UPF0213 protein NP_0776A (85 aa).

The GIY-YIG domain maps to 3-78 (ADHYVYVLSC…KSLSRAKKER (76 aa)). Basic and acidic residues predominate over residues 58-70 (KSAAMQREHEIKS). The interval 58–85 (KSAAMQREHEIKSLSRAKKERLVADETG) is disordered.

It belongs to the UPF0213 family.

The polypeptide is UPF0213 protein NP_0776A (Natronomonas pharaonis (strain ATCC 35678 / DSM 2160 / CIP 103997 / JCM 8858 / NBRC 14720 / NCIMB 2260 / Gabara) (Halobacterium pharaonis)).